The following is a 286-amino-acid chain: Transcription factor egl-46 (286 aa).

The C2H2-type 1; atypical zinc-finger motif lies at cysteine 180 to cysteine 200. 2 C2H2-type zinc fingers span residues tyrosine 208–histidine 230 and valine 248–glutamine 271.

Belongs to the INSM1 family. Interacts (via C-terminus) with egl-44 (via N-terminus); the interaction is direct; the interaction may regulate transcription. In terms of tissue distribution, expressed in touch cells, HSN cells, ventral cord motor neurons and ciliated ray neurons.

It is found in the nucleus. In terms of biological role, transcription factor. Represses expression of genes involved in differentiation of touch receptor neurons (TRN), probably acting as a heterodimer with egl-44, perhaps by occupying similar cis-regulatory elements as an unc-86/mec-3 heterodimer. Plays a role in cell fate specification of neurons, including the hook neuron HOB, the gas-sensing neuron BAG and touch receptor neurons. Plays a role in neuron differentiation by repressing the expression of zag-1 in FLP neurons, probably acting as a heterodimer with egl-44; because zag-1 represses expression of egl-46 and egl-44, together these proteins form a bistable, negative-feedback loop that regulates the choice between neuronal fates. Acts downstream of egl-44 to prevent touch cell differentiation in FLP neurons. Involved in male mating behavior, acting in concert with egl-44, via modulation of expression of polycystins lov-1 and pkd-2, homeodomain protein ceh-26, and neuropeptide-like protein nlp-8. Modulates the expression of a subset of terminal differentiation genes involved in O(2)- and CO(2)-sensing, acting in parallel to ets-5 and egl-13. May act upstream of RFX transcription factor daf-19 to regulate gene expression specifically in the HOB neuron. Plays a role in specifying commissural dendrites of the PVD nociceptive neurons, acting in concert with egl-44. In association with egl-44, regulates cell cycle exit in the neuronal Q cell lineage. The sequence is that of Transcription factor egl-46 from Caenorhabditis elegans.